The sequence spans 380 residues: Alcohol dehydrogenase 2 (380 aa).

Positions 48, 50, 70, 100, 103, 106, 114, and 178 each coordinate Zn(2+). Residues T50 and H70 each coordinate an alcohol. T50 contacts NAD(+). NAD(+) is bound by residues 203 to 208 (GLGAVG), D227, R232, T273, V296, 296 to 298 (VGV), F323, and R373.

Belongs to the zinc-containing alcohol dehydrogenase family. In terms of assembly, homodimer. Homotetramer. It depends on Zn(2+) as a cofactor.

It localises to the cytoplasm. The catalysed reaction is a primary alcohol + NAD(+) = an aldehyde + NADH + H(+). It carries out the reaction a secondary alcohol + NAD(+) = a ketone + NADH + H(+). The sequence is that of Alcohol dehydrogenase 2 (ADH2) from Solanum tuberosum (Potato).